The sequence spans 303 residues: Probable serine acetyltransferase 1 (303 aa).

Disordered stretches follow at residues 1–36 (MTAG…ESDA) and 271–290 (NPAR…ESMD).

It belongs to the transferase hexapeptide repeat family. Homomultimer.

It carries out the reaction L-serine + acetyl-CoA = O-acetyl-L-serine + CoA. It functions in the pathway amino-acid biosynthesis; L-cysteine biosynthesis; L-cysteine from L-serine: step 1/2. The sequence is that of Probable serine acetyltransferase 1 (SAT1) from Oryza sativa subsp. japonica (Rice).